A 172-amino-acid polypeptide reads, in one-letter code: Cyclin-L1 (172 aa).

The tract at residues 1–36 is disordered; the sequence is MASGPHSTATAAAAASSAAPSAGGSSSGTTTTTTTT. Positions 88-168 are cyclin-like; the sequence is ELIQAAGILL…LRGKSDQLHL (81 aa).

This sequence belongs to the cyclin family. Cyclin L subfamily. Interacts with POLR2A via its hyperphosphorylated C-terminal domain (CTD). Interacts with CDK11A, CDK11B, CDK12 and CDK13. May form a ternary complex with CDK11B and casein kinase II (CKII). Interacts with pre-mRNA-splicing factors, including at least SRSF1, SRSF2 and SRSF7/SLU7.

The protein localises to the nucleus speckle. It localises to the nucleus. Its subcellular location is the nucleoplasm. Involved in pre-mRNA splicing. Functions in association with cyclin-dependent kinases (CDKs). May play a role in the regulation of RNA polymerase II (pol II). Inhibited by the CDK-specific inhibitor CDKN1A/p21. The protein is Cyclin-L1 (CCNL1) of Pongo abelii (Sumatran orangutan).